Here is a 367-residue protein sequence, read N- to C-terminus: Histidinol-phosphate aminotransferase (367 aa).

Lys-221 is subject to N6-(pyridoxal phosphate)lysine.

It belongs to the class-II pyridoxal-phosphate-dependent aminotransferase family. Histidinol-phosphate aminotransferase subfamily. In terms of assembly, homodimer. Pyridoxal 5'-phosphate is required as a cofactor.

It carries out the reaction L-histidinol phosphate + 2-oxoglutarate = 3-(imidazol-4-yl)-2-oxopropyl phosphate + L-glutamate. Its pathway is amino-acid biosynthesis; L-histidine biosynthesis; L-histidine from 5-phospho-alpha-D-ribose 1-diphosphate: step 7/9. This chain is Histidinol-phosphate aminotransferase, found in Erythrobacter litoralis (strain HTCC2594).